Consider the following 250-residue polypeptide: Type III pantothenate kinase (250 aa).

Residue 6-13 (DVGNTNTV) coordinates ATP. 103–106 (GADR) serves as a coordination point for substrate. D105 serves as the catalytic Proton acceptor. D125 lines the K(+) pocket. An ATP-binding site is contributed by T128. T180 contacts substrate.

This sequence belongs to the type III pantothenate kinase family. As to quaternary structure, homodimer. Requires NH4(+) as cofactor. K(+) serves as cofactor.

It is found in the cytoplasm. The catalysed reaction is (R)-pantothenate + ATP = (R)-4'-phosphopantothenate + ADP + H(+). The protein operates within cofactor biosynthesis; coenzyme A biosynthesis; CoA from (R)-pantothenate: step 1/5. Catalyzes the phosphorylation of pantothenate (Pan), the first step in CoA biosynthesis. The sequence is that of Type III pantothenate kinase from Frankia casuarinae (strain DSM 45818 / CECT 9043 / HFP020203 / CcI3).